The primary structure comprises 419 residues: Serine hydroxymethyltransferase (419 aa).

(6S)-5,6,7,8-tetrahydrofolate-binding positions include L121 and 125–127 (GHL). K230 is subject to N6-(pyridoxal phosphate)lysine. Residue 354 to 356 (SPF) coordinates (6S)-5,6,7,8-tetrahydrofolate.

This sequence belongs to the SHMT family. As to quaternary structure, homodimer. Pyridoxal 5'-phosphate is required as a cofactor.

It is found in the cytoplasm. It catalyses the reaction (6R)-5,10-methylene-5,6,7,8-tetrahydrofolate + glycine + H2O = (6S)-5,6,7,8-tetrahydrofolate + L-serine. The protein operates within one-carbon metabolism; tetrahydrofolate interconversion. It functions in the pathway amino-acid biosynthesis; glycine biosynthesis; glycine from L-serine: step 1/1. Functionally, catalyzes the reversible interconversion of serine and glycine with tetrahydrofolate (THF) serving as the one-carbon carrier. This reaction serves as the major source of one-carbon groups required for the biosynthesis of purines, thymidylate, methionine, and other important biomolecules. Also exhibits THF-independent aldolase activity toward beta-hydroxyamino acids, producing glycine and aldehydes, via a retro-aldol mechanism. The protein is Serine hydroxymethyltransferase of Prochlorococcus marinus (strain SARG / CCMP1375 / SS120).